A 518-amino-acid polypeptide reads, in one-letter code: UNC5C-like protein (518 aa).

Topologically, residues 1 to 10 are extracellular; sequence MSPQESSVQP. A helical; Signal-anchor for type III membrane protein membrane pass occupies residues 11–31; the sequence is SQFLLLVGIPVASALLLAQCL. The Cytoplasmic portion of the chain corresponds to 32–518; sequence RWHCCQWLPG…NHGLELDEKL (487 aa). The ZU5 domain maps to 102 to 237; it reads VFSAREVDHR…FSLYTCVLEA (136 aa). Residues 186-400 form an interaction with RELA and NFKB1 region; it reads QQPSQACAYS…ETWAVPPPVS (215 aa). The segment at 208 to 235 is peptidase S68; that stretch reads PLGQPGTHISRDECRILLSHFSLYTCVL. Residues His-227 and Ser-229 contribute to the active site. In terms of domain architecture, Death spans 415 to 494; the sequence is QLQMLLEPNS…SAIQNYLNRS (80 aa).

The protein belongs to the unc-5 family. As to quaternary structure, interacts with p65/RELA and NFKB1.

The protein localises to the membrane. It is found in the cytoplasm. Functionally, inhibits NF-kappa-B-dependent transcription by impairing NF-kappa-B binding to its targets. This chain is UNC5C-like protein (Unc5cl), found in Mus musculus (Mouse).